The following is a 169-amino-acid chain: Lutropin/choriogonadotropin subunit beta (169 aa).

The first 20 residues, 1 to 20 (MEMLQGLLLWMLLSVGGVWA), serve as a signal peptide directing secretion. 6 cysteine pairs are disulfide-bonded: cysteine 29-cysteine 77, cysteine 43-cysteine 92, cysteine 46-cysteine 130, cysteine 54-cysteine 108, cysteine 58-cysteine 110, and cysteine 113-cysteine 120. N-linked (GlcNAc...) asparagine glycosylation is present at asparagine 33. The segment at 131–169 (APQTSSSCKDPPSQPLTSTSTPTPGASRRSSHPLPINTS) is disordered. Residues 145 to 158 (PLTSTSTPTPGASR) are compositionally biased toward low complexity.

The protein belongs to the glycoprotein hormones subunit beta family. In terms of assembly, heterodimer of a common alpha chain and a unique beta chain which confers biological specificity to thyrotropin, lutropin, follitropin and gonadotropin.

It localises to the secreted. In terms of biological role, promotes spermatogenesis and ovulation by stimulating the testes and ovaries to synthesize steroids. The polypeptide is Lutropin/choriogonadotropin subunit beta (LHB) (Equus asinus (Donkey)).